We begin with the raw amino-acid sequence, 1377 residues long: Endoribonuclease Dicer homolog 2b (1377 aa).

The segment covering 1 to 15 (MGGPLTAAGGRGDGG) has biased composition (gly residues). Residues 1–30 (MGGPLTAAGGRGDGGAKAVEPLRPPPPPDP) form a disordered region. The 182-residue stretch at 41-222 (ALERAVRGNT…HNYSKQISEI (182 aa)) folds into the Helicase ATP-binding domain. 54–61 (LETGSGKT) provides a ligand contact to ATP. A DECH box motif is present at residues 163–166 (DECH). Residues 388 to 561 (TLLQYRHMQD…DTYYRVESTP (174 aa)) form the Helicase C-terminal domain. The Dicer dsRNA-binding fold domain occupies 534–626 (SLRLGSISCQ…LPELDVPCDE (93 aa)). The PAZ domain occupies 798–913 (RDIDLLQTKD…LPPELCRIIM (116 aa)). 2 consecutive RNase III domains span residues 940-1095 (SVKL…STAG) and 1132-1276 (VRSL…LDSK). 3 residues coordinate Mg(2+): Glu1171, Asp1262, and Glu1265. The DRBM domain occupies 1302 to 1367 (DPVKGLQEFC…SKAVLKDLIA (66 aa)).

It belongs to the helicase family. Dicer subfamily. As to quaternary structure, may interact with ARGONAUTE1 or PINHEAD through their common PAZ domains. It depends on Mg(2+) as a cofactor. Requires Mn(2+) as cofactor.

The protein localises to the nucleus. Functionally, probably involved in the RNA silencing pathway. May cleave double-stranded RNA to produce short 21-24 nucleotides (nt) RNAs which target the selective destruction of complementary RNAs. The chain is Endoribonuclease Dicer homolog 2b (DCL2B) from Oryza sativa subsp. japonica (Rice).